The following is a 174-amino-acid chain: Gamma-crystallin F (174 aa).

2 consecutive Beta/gamma crystallin 'Greek key' domains span residues 2–40 (GKITFYEDRGFQGRHYECSTDHSNLQPYFSRCNSVRVDS) and 41–83 (GCWM…HLIP). Residues 84–87 (HSSS) form a connecting peptide region. 2 consecutive Beta/gamma crystallin 'Greek key' domains span residues 88–128 (HRIR…HVIE) and 129–171 (GYWV…RRIM).

It belongs to the beta/gamma-crystallin family.

Its function is as follows. Crystallins are the dominant structural components of the vertebrate eye lens. This is Gamma-crystallin F (Crygf) from Rattus norvegicus (Rat).